The chain runs to 140 residues: Putative nickel-responsive regulator (140 aa).

4 residues coordinate Ni(2+): H81, H92, H94, and C100.

The protein belongs to the transcriptional regulatory CopG/NikR family. Requires Ni(2+) as cofactor.

Functionally, transcriptional regulator. In Methanococcoides burtonii (strain DSM 6242 / NBRC 107633 / OCM 468 / ACE-M), this protein is Putative nickel-responsive regulator.